The following is a 63-amino-acid chain: uncharacterized protein (63 aa).

Residues 38–58 (ISLFIILHLCLLVCLLLSFYF) form a helical membrane-spanning segment.

The protein resides in the membrane. This is an uncharacterized protein from Saccharomyces cerevisiae (strain ATCC 204508 / S288c) (Baker's yeast).